Here is a 625-residue protein sequence, read N- to C-terminus: pH-response transcription factor pacC/RIM101 (625 aa).

Positions 1–34 (MSSQDQQQQQQPAQTQTSTSSSSNNENATTATSS) are enriched in low complexity. Residues 1–35 (MSSQDQQQQQQPAQTQTSTSSSSNNENATTATSSI) form a disordered region. 3 C2H2-type zinc fingers span residues 45 to 70 (LLCQ…CEKH), 81 to 105 (LTCG…IRVH), and 111 to 133 (HKCE…VKTH). Residues 391-416 (APMTATHSSHSVSSGTPALTPPSSSV) are compositionally biased toward polar residues. The segment at 391–440 (APMTATHSSHSVSSGTPALTPPSSSVSYTSGNSPMSSSGMSPISRHSSTS) is disordered. The span at 417–438 (SYTSGNSPMSSSGMSPISRHSS) shows a compositional bias: low complexity. Residues 444-447 (YPNL) carry the YPX[LI] motif 1 motif. Disordered stretches follow at residues 455–543 (SPHH…SPSV) and 584–625 (VKDE…DDDE). Composition is skewed to polar residues over residues 461 to 472 (TAPTSTLGTNFD) and 490 to 514 (GLNS…SPKE). The YPX[LI] motif 2 signature appears at 615-618 (YPVL).

Belongs to the pacC/RIM101 family. In terms of processing, activated by C-terminal proteolytic cleavage by signaling protease (probably palB/RIM13) at neutral to alkaline ambient pH.

The protein resides in the cytoplasm. It is found in the nucleus. Its function is as follows. Transcription factor that mediates regulation of both acid- and alkaline-expressed genes in response to ambient pH. At alkaline ambient pH, activates transcription of alkaline-expressed genes (including pac1 itself) and represses transcription of acid-expressed genes. In Sclerotinia sclerotiorum (White mold), this protein is pH-response transcription factor pacC/RIM101 (pac1).